The primary structure comprises 130 residues: Galectin-2 (130 aa).

The Galectin domain maps to 4 to 130 (KFEVKDLNMK…GLQISSFKLE (127 aa)). Residue 65 to 71 (WGQEQRE) coordinates a beta-D-galactoside.

In terms of assembly, homodimer.

This protein binds beta-galactoside. Its physiological function is not yet known. The sequence is that of Galectin-2 (Lgals2) from Mus musculus (Mouse).